A 1112-amino-acid polypeptide reads, in one-letter code: Lacto-N-biosidase (1112 aa).

Residues 1 to 34 (MEKSSNRRFGVRTVAAIVAGLMVGGMCTAMTASA) form the signal peptide. The cysteines at positions 187 and 189 are disulfide-linked. Beta-D-galactosyl-(1-&gt;3)-N-acetyl-D-glucosamine contacts are provided by Gln190, Glu216, Asn259, Asp320, Glu321, Tyr419, and Asp467. The active-site Proton donor/acceptor is the Glu321. A disulfide bridge connects residues Cys564 and Cys589. Positions 938–969 (ATPVELTEPEQPKDNPEVTETPEATGVTVSGD) are disordered. The BIG2 domain occupies 975–1041 (ALSLKKGTTA…ANGKSASVTV (67 aa)). Positions 1044-1061 (TEDSEVPGPTGPTEPTKP) are enriched in low complexity. The tract at residues 1044–1081 (TEDSEVPGPTGPTEPTKPGTEKPTTKPTTKPNDGKLSA) is disordered. A helical membrane pass occupies residues 1086–1106 (TAVLATIAALFALAGGAVVAV).

The protein belongs to the glycosyl hydrolase 20 family.

The protein resides in the cell membrane. It carries out the reaction beta-D-Gal-(1-&gt;3)-beta-D-GlcNAc-(1-&gt;3)-beta-D-Gal-(1-&gt;4)-D-Glc + H2O = beta-D-galactosyl-(1-&gt;3)-N-acetyl-D-glucosamine + lactose. Present in the infant gut, this enzyme is involved in the assimilation of type-1 human milk oligosaccharides (HMOs). It hydrolyzes via a retaining mechanism the beta-D-GlcNAc-(1-&gt;3)-beta-D-Gal linkage in lacto-N-tetraose (LNT or beta-D-Gal-(1-&gt;3)-beta-D-GlcNAc-(1-&gt;3)-beta-D-Gal-(1-&gt;4)-D-Glc), an abundant HMO unique to human breast milk, releasing lacto-N-biose (LNB or beta-D-Gal-(1-&gt;3)-D-GlcNAc) and lactose. Is a key enzymatic factor for growth and proliferation of B.bifidum in the gut ecosystem of breast-fed infants. Has substrate preference for unmodified beta-linked LNB since it does not hydrolyze the fucosylated forms of lacto-N-tetraose (lacto-N-fucopentaose I and II) or lacto-N-neotetraose. Is also able to display transglycosylation activity in vitro. In Bifidobacterium bifidum (strain DSM 20082 / JCM 1254 / BCRC 11844 / KCTC 3440 / E319f (Variant a)), this protein is Lacto-N-biosidase.